Here is a 184-residue protein sequence, read N- to C-terminus: Glutathione-regulated potassium-efflux system ancillary protein KefG (184 aa).

It belongs to the NAD(P)H dehydrogenase (quinone) family. KefG subfamily. As to quaternary structure, interacts with KefB.

It localises to the cell inner membrane. It carries out the reaction a quinone + NADH + H(+) = a quinol + NAD(+). The enzyme catalyses a quinone + NADPH + H(+) = a quinol + NADP(+). In terms of biological role, regulatory subunit of a potassium efflux system that confers protection against electrophiles. Required for full activity of KefB. The chain is Glutathione-regulated potassium-efflux system ancillary protein KefG from Escherichia coli O1:K1 / APEC.